Reading from the N-terminus, the 90-residue chain is Probable Fe(2+)-trafficking protein (90 aa).

Belongs to the Fe(2+)-trafficking protein family.

In terms of biological role, could be a mediator in iron transactions between iron acquisition and iron-requiring processes, such as synthesis and/or repair of Fe-S clusters in biosynthetic enzymes. The protein is Probable Fe(2+)-trafficking protein of Nitrosospira multiformis (strain ATCC 25196 / NCIMB 11849 / C 71).